A 229-amino-acid polypeptide reads, in one-letter code: Ribonuclease 3 (229 aa).

One can recognise an RNase III domain in the interval 5 to 127; it reads LSRLERQLGY…LIGAIYLDAG (123 aa). Glutamate 40 is a binding site for Mg(2+). Aspartate 44 is an active-site residue. Mg(2+) is bound by residues aspartate 113 and glutamate 116. Glutamate 116 is an active-site residue. The DRBM domain occupies 154–224; it reads DPKTRLQEFL…AAAALIALGV (71 aa).

It belongs to the ribonuclease III family. As to quaternary structure, homodimer. Requires Mg(2+) as cofactor.

It localises to the cytoplasm. The catalysed reaction is Endonucleolytic cleavage to 5'-phosphomonoester.. Its function is as follows. Digests double-stranded RNA. Involved in the processing of primary rRNA transcript to yield the immediate precursors to the large and small rRNAs (23S and 16S). Processes some mRNAs, and tRNAs when they are encoded in the rRNA operon. Processes pre-crRNA and tracrRNA of type II CRISPR loci if present in the organism. In Pseudomonas fluorescens (strain Pf0-1), this protein is Ribonuclease 3.